The following is a 412-amino-acid chain: Zinc finger protein 821 (412 aa).

The disordered stretch occupies residues 26–83 (RQAMMKTDFPGDLGSQRQAIQQLRDQDSSSSDSEGDEEETTQDEVSSHTSEEDGGVVK). The segment covering 58–67 (SEGDEEETTQ) has biased composition (acidic residues). 2 C2H2-type zinc fingers span residues 116-140 (GLCQCPLCQLDCGSREQLIAHVYQH) and 150-172 (YMCPVCGRALSSPGSLGRHLLIH). The stretch at 257-366 (KWALRRQNEP…EKMDMMLRAQ (110 aa)) forms a coiled coil. The interval 278–319 (RTAKKSRRDNETPEEREVRRMRDREAKRLQRMQETDEQRARR) is disordered.

This sequence belongs to the krueppel C2H2-type zinc-finger protein family.

Its subcellular location is the nucleus. May be involved in transcriptional regulation. The polypeptide is Zinc finger protein 821 (ZNF821) (Bos taurus (Bovine)).